The primary structure comprises 96 residues: Large ribosomal subunit protein uL23 (96 aa).

This sequence belongs to the universal ribosomal protein uL23 family. As to quaternary structure, part of the 50S ribosomal subunit. Contacts protein L29, and trigger factor when it is bound to the ribosome.

One of the early assembly proteins it binds 23S rRNA. One of the proteins that surrounds the polypeptide exit tunnel on the outside of the ribosome. Forms the main docking site for trigger factor binding to the ribosome. The chain is Large ribosomal subunit protein uL23 from Bacillus cereus (strain ATCC 10987 / NRS 248).